The sequence spans 120 residues: Immunoglobulin kappa variable 2D-28 (120 aa).

The first 19 residues, M1–S19, serve as a signal peptide directing secretion. The region spanning G20–P120 is the Ig-like domain. The interval D21–C43 is framework-1. Cysteines 43 and 113 form a disulfide. A complementarity-determining-1 region spans residues R44–D59. The framework-2 stretch occupies residues W60–Y74. Residues L75 to S81 form a complementarity-determining-2 region. Positions G82–C113 are framework-3. Positions M114–P120 are complementarity-determining-3.

Immunoglobulins are composed of two identical heavy chains and two identical light chains; disulfide-linked.

The protein resides in the secreted. Its subcellular location is the cell membrane. V region of the variable domain of immunoglobulin light chains that participates in the antigen recognition. Immunoglobulins, also known as antibodies, are membrane-bound or secreted glycoproteins produced by B lymphocytes. In the recognition phase of humoral immunity, the membrane-bound immunoglobulins serve as receptors which, upon binding of a specific antigen, trigger the clonal expansion and differentiation of B lymphocytes into immunoglobulins-secreting plasma cells. Secreted immunoglobulins mediate the effector phase of humoral immunity, which results in the elimination of bound antigens. The antigen binding site is formed by the variable domain of one heavy chain, together with that of its associated light chain. Thus, each immunoglobulin has two antigen binding sites with remarkable affinity for a particular antigen. The variable domains are assembled by a process called V-(D)-J rearrangement and can then be subjected to somatic hypermutations which, after exposure to antigen and selection, allow affinity maturation for a particular antigen. The polypeptide is Immunoglobulin kappa variable 2D-28 (Homo sapiens (Human)).